The following is a 292-amino-acid chain: Bifunctional protein FolD (292 aa).

NADP(+) is bound by residues 161–163 (GRS) and Ile231.

This sequence belongs to the tetrahydrofolate dehydrogenase/cyclohydrolase family. Homodimer.

The enzyme catalyses (6R)-5,10-methylene-5,6,7,8-tetrahydrofolate + NADP(+) = (6R)-5,10-methenyltetrahydrofolate + NADPH. It carries out the reaction (6R)-5,10-methenyltetrahydrofolate + H2O = (6R)-10-formyltetrahydrofolate + H(+). Its pathway is one-carbon metabolism; tetrahydrofolate interconversion. Catalyzes the oxidation of 5,10-methylenetetrahydrofolate to 5,10-methenyltetrahydrofolate and then the hydrolysis of 5,10-methenyltetrahydrofolate to 10-formyltetrahydrofolate. The protein is Bifunctional protein FolD of Protochlamydia amoebophila (strain UWE25).